Here is a 375-residue protein sequence, read N- to C-terminus: Chaperone protein DnaJ (375 aa).

The J domain maps to 4 to 68; it reads DYYETLGVDR…ETRARYDQFG (65 aa). A CR-type zinc finger spans residues 134–216; it reads GGEKEIRIPH…CGGAGRKQET (83 aa). Cys147, Cys150, Cys164, Cys167, Cys190, Cys193, Cys204, and Cys207 together coordinate Zn(2+). CXXCXGXG motif repeat units lie at residues 147–154, 164–171, 190–197, and 204–211; these read CQVCNGSG, CSTCNGAG, CPDCNGAG, and CDACGGAG.

The protein belongs to the DnaJ family. As to quaternary structure, homodimer. Zn(2+) serves as cofactor.

It localises to the cytoplasm. Participates actively in the response to hyperosmotic and heat shock by preventing the aggregation of stress-denatured proteins and by disaggregating proteins, also in an autonomous, DnaK-independent fashion. Unfolded proteins bind initially to DnaJ; upon interaction with the DnaJ-bound protein, DnaK hydrolyzes its bound ATP, resulting in the formation of a stable complex. GrpE releases ADP from DnaK; ATP binding to DnaK triggers the release of the substrate protein, thus completing the reaction cycle. Several rounds of ATP-dependent interactions between DnaJ, DnaK and GrpE are required for fully efficient folding. Also involved, together with DnaK and GrpE, in the DNA replication of plasmids through activation of initiation proteins. The polypeptide is Chaperone protein DnaJ (Rippkaea orientalis (strain PCC 8801 / RF-1) (Cyanothece sp. (strain PCC 8801))).